A 440-amino-acid chain; its full sequence is Thymidine phosphorylase (440 aa).

This sequence belongs to the thymidine/pyrimidine-nucleoside phosphorylase family. As to quaternary structure, homodimer.

The catalysed reaction is thymidine + phosphate = 2-deoxy-alpha-D-ribose 1-phosphate + thymine. The protein operates within pyrimidine metabolism; dTMP biosynthesis via salvage pathway; dTMP from thymine: step 1/2. In terms of biological role, the enzymes which catalyze the reversible phosphorolysis of pyrimidine nucleosides are involved in the degradation of these compounds and in their utilization as carbon and energy sources, or in the rescue of pyrimidine bases for nucleotide synthesis. This Rhizobium meliloti (strain 1021) (Ensifer meliloti) protein is Thymidine phosphorylase.